A 137-amino-acid polypeptide reads, in one-letter code: MKPIPSYKFRAAEFSTSVSNMISSQCSLCILSMAISTSFFAMPCPRYVDSTASIPIYPLSLTFLCGSILHTMQPMGMLGVPLLLSTAMYVNSGHWFKKYLYTYIEYGSDRSASISFLILANCSSLRMSNGLYTISMS.

A run of 2 helical transmembrane segments spans residues 26-42 (CSLCILSMAISTSFFAM) and 52-69 (ASIPIYPLSLTFLCGSIL).

The protein resides in the membrane. This is an uncharacterized protein from Saccharomyces cerevisiae (strain ATCC 204508 / S288c) (Baker's yeast).